We begin with the raw amino-acid sequence, 78 residues long: Sec-independent protein translocase protein TatA (78 aa).

A helical transmembrane segment spans residues 1–21 (MGSLSIWHWIVVLAVVLLLFG). Residues 43–78 (LAEDDEPAKTPAAPPEAPRPLPHQTSSAAEAEKKPV) are disordered. The span at 54–63 (AAPPEAPRPL) shows a compositional bias: pro residues.

It belongs to the TatA/E family. In terms of assembly, the Tat system comprises two distinct complexes: a TatABC complex, containing multiple copies of TatA, TatB and TatC subunits, and a separate TatA complex, containing only TatA subunits. Substrates initially bind to the TatABC complex, which probably triggers association of the separate TatA complex to form the active translocon.

It is found in the cell inner membrane. Functionally, part of the twin-arginine translocation (Tat) system that transports large folded proteins containing a characteristic twin-arginine motif in their signal peptide across membranes. TatA could form the protein-conducting channel of the Tat system. The sequence is that of Sec-independent protein translocase protein TatA from Xanthobacter autotrophicus (strain ATCC BAA-1158 / Py2).